Here is a 373-residue protein sequence, read N- to C-terminus: NAD(P)H-quinone oxidoreductase subunit 1 (373 aa).

A run of 8 helical transmembrane segments spans residues 28–48 (LLWL…GVLV), 98–118 (LLFT…WLII), 129–149 (VGVG…GLLM), 177–197 (LALA…VDIV), 205–225 (ILSW…ICAL), 267–287 (VLSA…PIPV), 309–329 (TVGI…AILL), and 348–368 (FLLP…LAFP).

Belongs to the complex I subunit 1 family. As to quaternary structure, NDH-1 is composed of at least 11 different subunits.

The protein localises to the cellular thylakoid membrane. The catalysed reaction is a plastoquinone + NADH + (n+1) H(+)(in) = a plastoquinol + NAD(+) + n H(+)(out). It catalyses the reaction a plastoquinone + NADPH + (n+1) H(+)(in) = a plastoquinol + NADP(+) + n H(+)(out). Its function is as follows. NDH-1 shuttles electrons from an unknown electron donor, via FMN and iron-sulfur (Fe-S) centers, to quinones in the respiratory and/or the photosynthetic chain. The immediate electron acceptor for the enzyme in this species is believed to be plastoquinone. Couples the redox reaction to proton translocation, and thus conserves the redox energy in a proton gradient. The sequence is that of NAD(P)H-quinone oxidoreductase subunit 1 from Synechococcus sp. (strain CC9605).